The sequence spans 634 residues: Mediator of RNA polymerase II transcription subunit 17 (634 aa).

Disordered stretches follow at residues D51–T73 and D606–G626. Over residues R611 to G623 the composition is skewed to polar residues.

This sequence belongs to the Mediator complex subunit 17 family. In terms of assembly, component of the Mediator complex.

It is found in the nucleus. Its function is as follows. Component of the Mediator complex, a coactivator involved in the regulated transcription of nearly all RNA polymerase II-dependent genes. Mediator functions as a bridge to convey information from gene-specific regulatory proteins to the basal RNA polymerase II transcription machinery. Mediator is recruited to promoters by direct interactions with regulatory proteins and serves as a scaffold for the assembly of a functional preinitiation complex with RNA polymerase II and the general transcription factors. The chain is Mediator of RNA polymerase II transcription subunit 17 (srb4) from Aspergillus terreus (strain NIH 2624 / FGSC A1156).